The sequence spans 157 residues: Small ribosomal subunit protein uS7 (157 aa).

It belongs to the universal ribosomal protein uS7 family. Part of the 30S ribosomal subunit. Contacts proteins S9 and S11.

Functionally, one of the primary rRNA binding proteins, it binds directly to 16S rRNA where it nucleates assembly of the head domain of the 30S subunit. Is located at the subunit interface close to the decoding center, probably blocks exit of the E-site tRNA. The polypeptide is Small ribosomal subunit protein uS7 (Caldicellulosiruptor saccharolyticus (strain ATCC 43494 / DSM 8903 / Tp8T 6331)).